The sequence spans 497 residues: Probable malate:quinone oxidoreductase (497 aa).

This sequence belongs to the MQO family. Requires FAD as cofactor.

The catalysed reaction is (S)-malate + a quinone = a quinol + oxaloacetate. It functions in the pathway carbohydrate metabolism; tricarboxylic acid cycle; oxaloacetate from (S)-malate (quinone route): step 1/1. The polypeptide is Probable malate:quinone oxidoreductase (Prochlorococcus marinus subsp. pastoris (strain CCMP1986 / NIES-2087 / MED4)).